A 563-amino-acid polypeptide reads, in one-letter code: Arginine--tRNA ligase (563 aa).

Residues 121–131 carry the 'HIGH' region motif; that stretch reads PNIAKPFSIGH.

This sequence belongs to the class-I aminoacyl-tRNA synthetase family. Monomer.

Its subcellular location is the cytoplasm. It catalyses the reaction tRNA(Arg) + L-arginine + ATP = L-arginyl-tRNA(Arg) + AMP + diphosphate. This is Arginine--tRNA ligase from Streptococcus thermophilus (strain ATCC BAA-250 / LMG 18311).